A 236-amino-acid chain; its full sequence is Phosphoribosylaminoimidazole-succinocarboxamide synthase (236 aa).

This sequence belongs to the SAICAR synthetase family.

The catalysed reaction is 5-amino-1-(5-phospho-D-ribosyl)imidazole-4-carboxylate + L-aspartate + ATP = (2S)-2-[5-amino-1-(5-phospho-beta-D-ribosyl)imidazole-4-carboxamido]succinate + ADP + phosphate + 2 H(+). It participates in purine metabolism; IMP biosynthesis via de novo pathway; 5-amino-1-(5-phospho-D-ribosyl)imidazole-4-carboxamide from 5-amino-1-(5-phospho-D-ribosyl)imidazole-4-carboxylate: step 1/2. This Pseudomonas putida (strain ATCC 700007 / DSM 6899 / JCM 31910 / BCRC 17059 / LMG 24140 / F1) protein is Phosphoribosylaminoimidazole-succinocarboxamide synthase.